Reading from the N-terminus, the 430-residue chain is Trigger factor (430 aa).

The region spanning 163–248 (GNIAIIDFKG…IKDIKVKELP (86 aa)) is the PPIase FKBP-type domain.

Belongs to the FKBP-type PPIase family. Tig subfamily.

It is found in the cytoplasm. The catalysed reaction is [protein]-peptidylproline (omega=180) = [protein]-peptidylproline (omega=0). Its function is as follows. Involved in protein export. Acts as a chaperone by maintaining the newly synthesized protein in an open conformation. Functions as a peptidyl-prolyl cis-trans isomerase. The sequence is that of Trigger factor from Clostridium botulinum (strain Langeland / NCTC 10281 / Type F).